An 87-amino-acid chain; its full sequence is Small ribosomal subunit protein bS20 (87 aa).

Residues 1-22 (MANSPQAKKRARQNEKRFAINK) are disordered.

It belongs to the bacterial ribosomal protein bS20 family.

Binds directly to 16S ribosomal RNA. The polypeptide is Small ribosomal subunit protein bS20 (Ruegeria sp. (strain TM1040) (Silicibacter sp.)).